The chain runs to 143 residues: 3-hydroxyacyl-[acyl-carrier-protein] dehydratase FabZ (143 aa).

H49 is an active-site residue.

It belongs to the thioester dehydratase family. FabZ subfamily.

The protein resides in the cytoplasm. It catalyses the reaction a (3R)-hydroxyacyl-[ACP] = a (2E)-enoyl-[ACP] + H2O. Its function is as follows. Involved in unsaturated fatty acids biosynthesis. Catalyzes the dehydration of short chain beta-hydroxyacyl-ACPs and long chain saturated and unsaturated beta-hydroxyacyl-ACPs. The chain is 3-hydroxyacyl-[acyl-carrier-protein] dehydratase FabZ from Wolbachia pipientis wMel.